A 274-amino-acid chain; its full sequence is Large ribosomal subunit protein uL2cz/uL2cy (274 aa).

Disordered stretches follow at residues 1-25 and 224-274; these read MAIH…VKSN and NPVD…RRSK.

Belongs to the universal ribosomal protein uL2 family. As to quaternary structure, part of the 50S ribosomal subunit.

It is found in the plastid. It localises to the chloroplast. This is Large ribosomal subunit protein uL2cz/uL2cy (rpl2-A) from Cucumis sativus (Cucumber).